The primary structure comprises 116 residues: MNHNKSYRKLGRRADHRKAMLKNMTISLIKAERIETTVTRAKELRKFAERMITFGKKNTLASRRNAFAFLRDEEVVAKIFNEIAPKYAERNGGYTRIIKTSVRKGDSAEMAIIELV.

The protein belongs to the bacterial ribosomal protein bL17 family. As to quaternary structure, part of the 50S ribosomal subunit. Contacts protein L32.

The polypeptide is Large ribosomal subunit protein bL17 (Fusobacterium nucleatum subsp. nucleatum (strain ATCC 25586 / DSM 15643 / BCRC 10681 / CIP 101130 / JCM 8532 / KCTC 2640 / LMG 13131 / VPI 4355)).